We begin with the raw amino-acid sequence, 234 residues long: Large ribosomal subunit protein uL1 (234 aa).

This sequence belongs to the universal ribosomal protein uL1 family. Part of the 50S ribosomal subunit.

In terms of biological role, binds directly to 23S rRNA. The L1 stalk is quite mobile in the ribosome, and is involved in E site tRNA release. Its function is as follows. Protein L1 is also a translational repressor protein, it controls the translation of the L11 operon by binding to its mRNA. The chain is Large ribosomal subunit protein uL1 from Yersinia pseudotuberculosis serotype O:1b (strain IP 31758).